Consider the following 270-residue polypeptide: Putative protein-disulfide oxidoreductase RT0103 (270 aa).

The first 17 residues, 1-17 (MKNIFIVLIFLFLSSCA), serve as a signal peptide directing secretion. In terms of domain architecture, Thioredoxin spans 71–264 (SVLTQDLHEQ…ISRAVDRALE (194 aa)). An intrachain disulfide couples Cys117 to Cys120.

The protein belongs to the thioredoxin family. DsbA subfamily.

The protein resides in the periplasm. Functionally, may be required for disulfide bond formation in some proteins. In Rickettsia typhi (strain ATCC VR-144 / Wilmington), this protein is Putative protein-disulfide oxidoreductase RT0103.